The primary structure comprises 147 residues: UPF0306 protein YhbP (147 aa).

Belongs to the UPF0306 family.

The sequence is that of UPF0306 protein YhbP from Escherichia coli O17:K52:H18 (strain UMN026 / ExPEC).